Reading from the N-terminus, the 411-residue chain is Proteasome-activating nucleotidase 2 (411 aa).

Positions 35–75 (IVAVNGELQAQLDDVEARREELREEVNRLQRENETLKTASL) form a coiled coil. ATP is bound by residues 196-201 (GTGKTM) and H335. Positions 408–411 (SYIQ) are docks into pockets in the proteasome alpha-ring to cause gate opening.

It belongs to the AAA ATPase family. Homohexamer. The hexameric complex has a two-ring architecture resembling a top hat that caps the 20S proteasome core at one or both ends. Upon ATP-binding, the C-terminus of PAN interacts with the alpha-rings of the proteasome core by binding to the intersubunit pockets.

Its subcellular location is the cytoplasm. In terms of biological role, ATPase which is responsible for recognizing, binding, unfolding and translocation of substrate proteins into the archaeal 20S proteasome core particle. Is essential for opening the gate of the 20S proteasome via an interaction with its C-terminus, thereby allowing substrate entry and access to the site of proteolysis. Thus, the C-termini of the proteasomal ATPase function like a 'key in a lock' to induce gate opening and therefore regulate proteolysis. Unfolding activity requires energy from ATP hydrolysis, whereas ATP binding alone promotes ATPase-20S proteasome association which triggers gate opening, and supports translocation of unfolded substrates. This is Proteasome-activating nucleotidase 2 from Halobacterium salinarum (strain ATCC 700922 / JCM 11081 / NRC-1) (Halobacterium halobium).